An 812-amino-acid chain; its full sequence is Leucine--tRNA ligase (812 aa).

The short motif at 40-51 (SYPSGSNLHAGH) is the 'HIGH' region element. The 'KMSKS' region signature appears at 572–576 (KMSKS). ATP is bound at residue lysine 575.

It belongs to the class-I aminoacyl-tRNA synthetase family.

The protein localises to the cytoplasm. The catalysed reaction is tRNA(Leu) + L-leucine + ATP = L-leucyl-tRNA(Leu) + AMP + diphosphate. In Clostridium tetani (strain Massachusetts / E88), this protein is Leucine--tRNA ligase.